The sequence spans 346 residues: Deoxyhypusine hydroxylase (346 aa).

HEAT-like PBS-type repeat units lie at residues 71–100, 104–133, 213–242, 246–275, and 279–320; these read VLLR…LNDT, LMVR…LNDE, LKLR…LIKD, AIFR…LQNV, and EMVR…SKDA. 3 residues coordinate Fe cation: His-75, His-108, and Glu-109. Fe cation-binding residues include His-250, His-283, and Glu-284.

It belongs to the deoxyhypusine hydroxylase family. It depends on Fe(2+) as a cofactor.

It carries out the reaction [eIF5A protein]-deoxyhypusine + AH2 + O2 = [eIF5A protein]-hypusine + A + H2O. It functions in the pathway protein modification; eIF5A hypusination. In terms of biological role, catalyzes the hydroxylation of the N(6)-(4-aminobutyl)-L-lysine intermediate produced by deoxyhypusine synthase/DHPS on a critical lysine of the eukaryotic translation initiation factor 5A/eIF-5A. This is the second step of the post-translational modification of that lysine into an unusual amino acid residue named hypusine. Hypusination is unique to mature eIF-5A factor and is essential for its function. The polypeptide is Deoxyhypusine hydroxylase (Plasmodium vivax (strain Salvador I)).